A 278-amino-acid polypeptide reads, in one-letter code: Delta(3,5)-Delta(2,4)-dienoyl-CoA isomerase, peroxisomal (278 aa).

The residue at position 1 (Met-1) is an N-acetylmethionine. Substrate contacts are provided by residues Ser-69 to Leu-73 and Gly-128. Positions Ala-276–Leu-278 match the Microbody targeting signal motif.

Belongs to the enoyl-CoA hydratase/isomerase family. As to expression, expressed in roots, leaves, stems and flowers.

The protein localises to the peroxisome. The enzyme catalyses a (3E,5Z)-dienoyl-CoA = a (2E,4E)-(5,6-saturated)-dienoyl-CoA. It functions in the pathway lipid metabolism; fatty acid beta-oxidation. Functionally, converts 3,5-dienoyl-CoAs to the corresponding 2,4-dienoyl-CoAs. Involved in degradation of unsaturated fatty acids. This is Delta(3,5)-Delta(2,4)-dienoyl-CoA isomerase, peroxisomal from Arabidopsis thaliana (Mouse-ear cress).